The sequence spans 154 residues: MKIPLGILLSENQADKENILKHLEENSYIITVGDRTTEKMIDFDLIPSLQIVDGIEKREKREPPKLVNTTEITVDNPPAEITSQSIDVIKKAFSMESPVRILVTGEEDLLVLPVCIHAPENSVVMYGQPNEGLVIVKITSEIRNKVQSLLDLME.

3 residues coordinate GTP: Asp-34, Asp-53, and Glu-107.

This sequence belongs to the GTP-dependent DPCK family.

The enzyme catalyses 3'-dephospho-CoA + GTP = GDP + CoA + H(+). It participates in cofactor biosynthesis; coenzyme A biosynthesis. Functionally, catalyzes the GTP-dependent phosphorylation of the 3'-hydroxyl group of dephosphocoenzyme A to form coenzyme A (CoA). In Nitrosopumilus maritimus (strain SCM1), this protein is GTP-dependent dephospho-CoA kinase.